We begin with the raw amino-acid sequence, 646 residues long: Serine/threonine-protein kinase max-2 (646 aa).

The tract at residues 19 to 40 (FSPSDKDKDRDDEMKPSSSAMD) is disordered. Positions 22-33 (SDKDKDRDDEMK) are enriched in basic and acidic residues. Residues 41–54 (ISQPYNTVHRVHVG) enclose the CRIB domain. The tract at residues 136 to 345 (LQCSNGSATS…PPPPEEPPVR (210 aa)) is disordered. 2 stretches are compositionally biased toward low complexity: residues 142 to 157 (SATSPSTSVSASSSSA) and 167 to 180 (LSTASSTDTSLSLS). The span at 196–205 (SAPQLKTFTG) shows a compositional bias: polar residues. Positions 214–223 (SPFPPQPPVL) are enriched in pro residues. Residues 229 to 245 (TASAVATTTTNPTTSNG) are compositionally biased toward low complexity. Residues 246–262 (APPPVPGSKGPPVPPKP) show a composition bias toward pro residues. Composition is skewed to low complexity over residues 273–307 (SSGCSSPQQYSSARSVGNSLSNGSVVSTTSSDGDV) and 323–334 (KNGNTTTNKTTV). The region spanning 376–627 (YEMKKQIGVG…TTELLAHPFL (252 aa)) is the Protein kinase domain. Residues 382–390 (IGVGASGTV) and Lys-405 contribute to the ATP site. Asp-496 acts as the Proton acceptor in catalysis.

It belongs to the protein kinase superfamily. STE Ser/Thr protein kinase family. STE20 subfamily. As to quaternary structure, interacts with mlk-1; the interaction is independent of max-2 and mlk-1 kinase activities. Interacts with mig-2 (GTP-bound form). Requires Mg(2+) as cofactor.

It localises to the perikaryon. The protein resides in the cell projection. Its subcellular location is the dendrite. It is found in the cytoplasm. It carries out the reaction L-seryl-[protein] + ATP = O-phospho-L-seryl-[protein] + ADP + H(+). It catalyses the reaction L-threonyl-[protein] + ATP = O-phospho-L-threonyl-[protein] + ADP + H(+). Functionally, serine/threonine-protein kinase, which phosphorylates mlk-1. Involved in the stress response to heavy metals by activating the mlk-1/mek-1/kgb-1 pathway. In ventral cord commissural motoneurons, required for dorsal axon guidance downstream of unc-6/netrin repulsion receptor unc-5 and probably of Rho GTPases ced-10 and mig-2. Plays a redundant role with mig-10 in orientating axonal growth of HSN neurons. Plays a redundant role with pak-1 in P neuroblast migration and in distal tip cell (DTC)-mediated guidance of gonad elongation probably downstream of Rho GTPases. In association with pak-2, plays a role in embryogenesis. In association with pak-1, may be involved in spermatogenesis. The chain is Serine/threonine-protein kinase max-2 from Caenorhabditis elegans.